We begin with the raw amino-acid sequence, 324 residues long: Annexin A10 (324 aa).

Annexin repeat units follow at residues 17–88, 89–160, 171–243, and 247–318; these read FNPM…GLMY, PPPS…NLVQ, AMAA…AIVR, and DKPS…AICA.

The protein belongs to the annexin family.

The sequence is that of Annexin A10 (Anxa10) from Mus musculus (Mouse).